Reading from the N-terminus, the 38-residue chain is Glucagon-like peptide (38 aa).

This sequence belongs to the glucagon family.

Its subcellular location is the secreted. The polypeptide is Glucagon-like peptide (Hydrolagus colliei (Spotted ratfish)).